The sequence spans 73 residues: Defensin-like protein 6 (73 aa).

The N-terminal stretch at 1–26 (MENKFFAAFFLLLVLFSSQEIIGGEG) is a signal peptide. 4 disulfide bridges follow: cysteine 29–cysteine 73, cysteine 40–cysteine 60, cysteine 46–cysteine 67, and cysteine 50–cysteine 69.

This sequence belongs to the DEFL family.

Its subcellular location is the secreted. Confers broad-spectrum resistance to pathogens. The polypeptide is Defensin-like protein 6 (PDF2.5) (Arabidopsis thaliana (Mouse-ear cress)).